The primary structure comprises 85 residues: Elongation factor 1-beta (85 aa).

The protein belongs to the EF-1-beta/EF-1-delta family.

In terms of biological role, promotes the exchange of GDP for GTP in EF-1-alpha/GDP, thus allowing the regeneration of EF-1-alpha/GTP that could then be used to form the ternary complex EF-1-alpha/GTP/AAtRNA. In Methanosphaerula palustris (strain ATCC BAA-1556 / DSM 19958 / E1-9c), this protein is Elongation factor 1-beta.